A 229-amino-acid polypeptide reads, in one-letter code: Platelet-activating factor acetylhydrolase IB subunit alpha2 (229 aa).

Position 2 is an N-acetylserine (Ser2). The residue at position 2 (Ser2) is a Phosphoserine. Ser48 is a catalytic residue. Position 64 is a phosphoserine (Ser64). Catalysis depends on residues Asp193 and His196. Residue Thr220 is modified to Phosphothreonine.

This sequence belongs to the 'GDSL' lipolytic enzyme family. Platelet-activating factor acetylhydrolase IB beta/gamma subunits subfamily. In terms of assembly, forms a catalytic dimer which is either homodimer (alpha2/alpha2 homodimer) or heterodimer with PAFAH1B3 (alpha2/alpha1 heterodimer). Component of the cytosolic (PAF-AH (I)) heterotetrameric enzyme, which is composed of PAFAH1B1 (beta), PAFAH1B2 (alpha2) and PAFAH1B3 (alpha1) subunits. The catalytic activity of the enzyme resides in the alpha1 (PAFAH1B3) and alpha2 (PAFAH1B2) subunits, whereas the beta subunit (PAFAH1B1) has regulatory activity. Trimer formation is not essential for the catalytic activity. Interacts (homodimer form) with PAFAH1B1 (homodimer form); PAFAH1B2 competes with NDEL1 for PAFAH1B1 binding. Interacts with VLDLR; this interaction may modulate the Reelin pathway.

It localises to the cytoplasm. The catalysed reaction is a 1-O-alkyl-2-acetyl-sn-glycero-3-phosphocholine + H2O = a 1-O-alkyl-sn-glycero-3-phosphocholine + acetate + H(+). It carries out the reaction 1-O-hexadecyl-2-acetyl-sn-glycero-3-phosphocholine + H2O = 1-O-hexadecyl-sn-glycero-3-phosphocholine + acetate + H(+). The enzyme catalyses 1-O-hexadecyl-2-acetyl-sn-glycero-3-phosphate + H2O = 1-O-hexadecyl-sn-glycero-3-phosphate + acetate + H(+). It catalyses the reaction 1-O-hexadecyl-2-acetyl-sn-glycero-3-phosphoethanolamine + H2O = 1-O-hexadecyl-sn-glycero-3-phosphoethanolamine + acetate + H(+). Beta subunit (PAFAH1B1) stimulates the acetylhydrolase activity of the alpha2/alpha2 catalytic homodimer. Functionally, alpha2 catalytic subunit of the cytosolic type I platelet-activating factor (PAF) acetylhydrolase (PAF-AH (I)) heterotetrameric enzyme that catalyzes the hydrolyze of the acetyl group at the sn-2 position of PAF and its analogs and modulates the action of PAF. The activity and substrate specificity of PAF-AH (I) are affected by its subunit composition. The alpha2/alpha2 homodimer (PAFAH1B2/PAFAH1B2 homodimer) hydrolyzes PAF and 1-O-alkyl-2-acetyl-sn-glycero-3-phosphorylethanolamine (AAGPE) more efficiently than 1-O-alkyl-2-acetyl-sn-glycero-3-phosphoric acid (AAGPA). In contrast, the alpha1/alpha2 heterodimer(PAFAH1B3/PAFAH1B3 heterodimer) hydrolyzes AAGPA more efficiently than PAF, but has little hydrolytic activity towards AAGPE. May play a role in male germ cell meiosis during the late pachytenestage and meiotic divisions as well as early spermiogenesis. In Pongo abelii (Sumatran orangutan), this protein is Platelet-activating factor acetylhydrolase IB subunit alpha2.